A 340-amino-acid polypeptide reads, in one-letter code: Dihydroorotate dehydrogenase (quinone) (340 aa).

Residues 63–67 (AGLDK) and Thr-87 contribute to the FMN site. Lys-67 contacts substrate. 112–116 (NRMGF) is a substrate binding site. Residues Asn-140 and Asn-173 each contribute to the FMN site. Residue Asn-173 participates in substrate binding. Residue Ser-176 is the Nucleophile of the active site. Asn-178 serves as a coordination point for substrate. FMN-binding residues include Lys-218 and Thr-246. 247–248 (NT) provides a ligand contact to substrate. FMN contacts are provided by residues Gly-269, Gly-298, and 319–320 (YT).

This sequence belongs to the dihydroorotate dehydrogenase family. Type 2 subfamily. In terms of assembly, monomer. FMN is required as a cofactor.

The protein resides in the cell membrane. It catalyses the reaction (S)-dihydroorotate + a quinone = orotate + a quinol. The protein operates within pyrimidine metabolism; UMP biosynthesis via de novo pathway; orotate from (S)-dihydroorotate (quinone route): step 1/1. Catalyzes the conversion of dihydroorotate to orotate with quinone as electron acceptor. The sequence is that of Dihydroorotate dehydrogenase (quinone) from Methylococcus capsulatus (strain ATCC 33009 / NCIMB 11132 / Bath).